The primary structure comprises 1306 residues: Contactin-associated protein-like 5 (1306 aa).

The first 24 residues, 1–24 (MDSLPRLTSVLTLLFSGLWHLGLT), serve as a signal peptide directing secretion. The Extracellular segment spans residues 25 to 1237 (ATNYNCDDPL…PLTNAVRSDS (1213 aa)). An F5/8 type C domain is found at 30–174 (CDDPLASLLS…IGMRVEVYGC (145 aa)). A disulfide bridge links Cys30 with Cys174. Laminin G-like domains are found at residues 180–360 (VADF…TFSC) and 367–544 (PITF…IDLC). Asn282, Asn355, and Asn496 each carry an N-linked (GlcNAc...) asparagine glycan. A disulfide bridge connects residues Cys329 and Cys360. 3 disulfides stabilise this stretch: Cys512–Cys544, Cys550–Cys561, and Cys555–Cys570. The EGF-like 1 domain maps to 546–583 (IKDRCLPNYCEHGGSCSQSWTTFYCNCSDTSYTGATCH). Asn571 carries N-linked (GlcNAc...) asparagine glycosylation. An intrachain disulfide couples Cys572 to Cys582. The 207-residue stretch at 584–790 (NSIYEQSCEV…LRCYGDRRFW (207 aa)) folds into the Fibrinogen C-terminal domain. An N-linked (GlcNAc...) asparagine glycan is attached at Asn622. A Laminin G-like 3 domain is found at 791 to 956 (NAVSFYTEAS…KVTSGVRPGC (166 aa)). Disulfide bonds link Cys929/Cys956, Cys960/Cys973, Cys967/Cys982, Cys984/Cys994, and Cys1164/Cys1199. The region spanning 957–995 (PGHCSSYGSICHNGGKCVEKHNGYLCDCTNSPYEGPFCK) is the EGF-like 2 domain. The Laminin G-like 4 domain occupies 1013–1199 (QEPYPVTKNI…VHGTLTESSC (187 aa)). Residues 1238-1258 (AVIGGVIAVVIFIIFCIIGIM) form a helical membrane-spanning segment. The Cytoplasmic portion of the chain corresponds to 1259 to 1306 (TRFLYQHKQSHRTSQMKEKEYPENLDSSFRNEIDLQNTVSECKREYFI).

The protein belongs to the neurexin family.

Its subcellular location is the membrane. May play a role in the correct development and proper functioning of the peripheral and central nervous system and be involved in cell adhesion and intercellular communication. This Homo sapiens (Human) protein is Contactin-associated protein-like 5 (CNTNAP5).